Consider the following 396-residue polypeptide: Stearoyl-[acyl-carrier-protein] 9-desaturase, chloroplastic (396 aa).

The transit peptide at 1–33 directs the protein to the chloroplast; sequence MAIRINTATFQSDLYRSFAFPQPKPLRSPKFAM. 6 residues coordinate Fe cation: Glu-138, Glu-176, His-179, Glu-229, Glu-262, and His-265.

It belongs to the fatty acid desaturase type 2 family. In terms of assembly, homodimer. Fe(2+) serves as cofactor.

The protein resides in the plastid. It is found in the chloroplast. It carries out the reaction octadecanoyl-[ACP] + 2 reduced [2Fe-2S]-[ferredoxin] + O2 + 2 H(+) = (9Z)-octadecenoyl-[ACP] + 2 oxidized [2Fe-2S]-[ferredoxin] + 2 H2O. Its pathway is lipid metabolism; fatty acid metabolism. Functionally, converts stearoyl-ACP to oleoyl-ACP by introduction of a cis double bond between carbons 9 and 10 of the acyl chain. This Helianthus annuus (Common sunflower) protein is Stearoyl-[acyl-carrier-protein] 9-desaturase, chloroplastic.